Consider the following 882-residue polypeptide: DNA mismatch repair protein MutS (882 aa).

656 to 663 contributes to the ATP binding site; sequence GPNASGKS.

It belongs to the DNA mismatch repair MutS family.

This protein is involved in the repair of mismatches in DNA. It is possible that it carries out the mismatch recognition step. This protein has a weak ATPase activity. In Synechococcus sp. (strain ATCC 27144 / PCC 6301 / SAUG 1402/1) (Anacystis nidulans), this protein is DNA mismatch repair protein MutS.